A 107-amino-acid polypeptide reads, in one-letter code: MAGRSGDSDEELLKAVRIIKILYQSNPYPTPEGTRQARRNRRRRWRARQRQIHTLSERILSNFLGRPAEPVPLQLPPLERLNLDCSEDSGTSGTQQSQGTTEGVGNP.

Residues S5 and S8 each carry the phosphoserine; by host CK2 modification. A homomultimerization region spans residues 18–26; sequence IIKILYQSN. 2 disordered regions span residues 26–48 and 81–107; these read NPYP…WRAR and LNLD…VGNP. The short motif at 34 to 50 is the Nuclear localization signal and RNA-binding (RRE) element; the sequence is TRQARRNRRRRWRARQR. The span at 36-48 shows a compositional bias: basic residues; that stretch reads QARRNRRRRWRAR. A Nuclear export signal and binding to XPO1 motif is present at residues 73–84; the sequence is LQLPPLERLNLD. The segment covering 89–101 has biased composition (low complexity); sequence SGTSGTQQSQGTT. S92 carries the phosphoserine; by host modification.

The protein belongs to the HIV-1 REV protein family. Homomultimer; when bound to the RRE. Multimeric assembly is essential for activity and may involve XPO1. Binds to human KPNB1, XPO1, TNPO1, RANBP5 and IPO7. Interacts with the viral Integrase. Interacts with human KHDRBS1. Interacts with human NAP1; this interaction decreases Rev multimerization and stimulates its activity. Interacts with human DEAD-box helicases DDX3 and DDX24; these interactions may serve for viral RNA export to the cytoplasm and packaging, respectively. Interacts with human PSIP1; this interaction may inhibit HIV-1 DNA integration by promoting dissociation of the Integrase-LEDGF/p75 complex. Post-translationally, asymmetrically arginine dimethylated at one site by host PRMT6. Methylation impairs the RNA-binding activity and export of viral RNA from the nucleus to the cytoplasm. In terms of processing, phosphorylated by protein kinase CK2. Presence of, and maybe binding to the N-terminus of the regulatory beta subunit of CK2 is necessary for CK2-mediated Rev's phosphorylation.

The protein localises to the host nucleus. The protein resides in the host nucleolus. It is found in the host cytoplasm. Its function is as follows. Escorts unspliced or incompletely spliced viral pre-mRNAs (late transcripts) out of the nucleus of infected cells. These pre-mRNAs carry a recognition sequence called Rev responsive element (RRE) located in the env gene, that is not present in fully spliced viral mRNAs (early transcripts). This function is essential since most viral proteins are translated from unspliced or partially spliced pre-mRNAs which cannot exit the nucleus by the pathway used by fully processed cellular mRNAs. Rev itself is translated from a fully spliced mRNA that readily exits the nucleus. Rev's nuclear localization signal (NLS) binds directly to KPNB1/Importin beta-1 without previous binding to KPNA1/Importin alpha-1. KPNB1 binds to the GDP bound form of RAN (Ran-GDP) and targets Rev to the nucleus. In the nucleus, the conversion from Ran-GDP to Ran-GTP dissociates Rev from KPNB1 and allows Rev's binding to the RRE in viral pre-mRNAs. Rev multimerization on the RRE via cooperative assembly exposes its nuclear export signal (NES) to the surface. Rev can then form a complex with XPO1/CRM1 and Ran-GTP, leading to nuclear export of the complex. Conversion from Ran-GTP to Ran-GDP mediates dissociation of the Rev/RRE/XPO1/RAN complex, so that Rev can return to the nucleus for a subsequent round of export. Beside KPNB1, also seems to interact with TNPO1/Transportin-1, RANBP5/IPO5 and IPO7/RANBP7 for nuclear import. The nucleoporin-like HRB/RIP is an essential cofactor that probably indirectly interacts with Rev to release HIV RNAs from the perinuclear region to the cytoplasm. In Homo sapiens (Human), this protein is Protein Rev.